The primary structure comprises 182 residues: NAD(P)H-quinone oxidoreductase subunit J (182 aa).

It belongs to the complex I 30 kDa subunit family. As to quaternary structure, NDH-1 can be composed of about 15 different subunits; different subcomplexes with different compositions have been identified which probably have different functions.

It localises to the cellular thylakoid membrane. It catalyses the reaction a plastoquinone + NADH + (n+1) H(+)(in) = a plastoquinol + NAD(+) + n H(+)(out). The enzyme catalyses a plastoquinone + NADPH + (n+1) H(+)(in) = a plastoquinol + NADP(+) + n H(+)(out). Functionally, NDH-1 shuttles electrons from an unknown electron donor, via FMN and iron-sulfur (Fe-S) centers, to quinones in the respiratory and/or the photosynthetic chain. The immediate electron acceptor for the enzyme in this species is believed to be plastoquinone. Couples the redox reaction to proton translocation, and thus conserves the redox energy in a proton gradient. Cyanobacterial NDH-1 also plays a role in inorganic carbon-concentration. The chain is NAD(P)H-quinone oxidoreductase subunit J from Synechococcus sp. (strain WH7803).